Reading from the N-terminus, the 375-residue chain is Growth/differentiation factor 8 (375 aa).

The signal sequence occupies residues 1 to 23 (MQKLQLCVYIYLFMLIVAGPVDL). A propeptide spanning residues 24–266 (NENSEQKENV…VTDTPKRSRR (243 aa)) is cleaved from the precursor. N-linked (GlcNAc...) asparagine glycosylation is present at N71. 4 cysteine pairs are disulfide-bonded: C272/C282, C281/C340, C309/C372, and C313/C374.

Belongs to the TGF-beta family. Homodimer; disulfide-linked. Interacts with WFIKKN2, leading to inhibit its activity. Interacts with FST3. Post-translationally, synthesized as large precursor molecule that undergoes proteolytic cleavage to generate an N-terminal propeptide and a disulfide linked C-terminal dimer, which is the biologically active molecule. The circulating form consists of a latent complex of the C-terminal dimer and other proteins, including its propeptide, which maintain the C-terminal dimer in a latent, inactive state. Ligand activation requires additional cleavage of the prodomain by a tolloid-like metalloproteinase.

The protein resides in the secreted. Its function is as follows. Acts specifically as a negative regulator of skeletal muscle growth. The chain is Growth/differentiation factor 8 (MSTN) from Homo sapiens (Human).